The chain runs to 858 residues: Heat shock protein 105 kDa (858 aa).

At S2 the chain carries N-acetylserine. K471 carries the N6-acetyllysine modification. 2 disordered regions span residues 500–584 (KVPT…PPEA) and 796–858 (CEPV…MDLD). A compositionally biased stretch (acidic residues) spans 504–514 (EENEMSSEADM). S509 and S510 each carry phosphoserine. The segment covering 532 to 554 (QQDNSEAGTQPQVQTDAQQTSQS) has biased composition (polar residues). S557 carries the phosphoserine modification. T561 is modified (phosphothreonine). Basic and acidic residues-rich tracts occupy residues 563 to 584 (EENK…PPEA) and 805 to 814 (PKIESPKLER). S809 carries the phosphoserine modification. T815 is subject to Phosphothreonine. The span at 821–832 (IDKKEEDLEDKN) shows a compositional bias: basic and acidic residues. Polar residues predominate over residues 849-858 (EKNSVNMDLD).

The protein belongs to the heat shock protein 70 family. In terms of assembly, interacts with HSPA8/HSC70. Interacts with HSPA1A (via NBD) and HSPA1B (via NBD). In terms of processing, phosphorylation on Ser-509 may be important for regulation of the HSPA8/HSC70 chaperone activity. Highly expressed in testis. Present at lower levels in most brain regions, except cerebellum. Overexpressed in cancer cells.

Its subcellular location is the cytoplasm. Acts as a nucleotide-exchange factor (NEF) for chaperone proteins HSPA1A and HSPA1B, promoting the release of ADP from HSPA1A/B thereby triggering client/substrate protein release. Prevents the aggregation of denatured proteins in cells under severe stress, on which the ATP levels decrease markedly. Inhibits HSPA8/HSC70 ATPase and chaperone activities. This is Heat shock protein 105 kDa (HSPH1) from Homo sapiens (Human).